A 459-amino-acid chain; its full sequence is Putrescine aminotransferase (459 aa).

Residues 150–151 (GT) and Q274 contribute to the pyridoxal 5'-phosphate site. K300 carries the post-translational modification N6-(pyridoxal phosphate)lysine. T332 provides a ligand contact to pyridoxal 5'-phosphate.

This sequence belongs to the class-III pyridoxal-phosphate-dependent aminotransferase family. Putrescine aminotransferase subfamily. The cofactor is pyridoxal 5'-phosphate.

The enzyme catalyses an alkane-alpha,omega-diamine + 2-oxoglutarate = an omega-aminoaldehyde + L-glutamate. It catalyses the reaction putrescine + 2-oxoglutarate = 1-pyrroline + L-glutamate + H2O. It carries out the reaction cadaverine + 2-oxoglutarate = 5-aminopentanal + L-glutamate. It participates in amine and polyamine degradation; putrescine degradation; 4-aminobutanal from putrescine (transaminase route): step 1/1. Catalyzes the aminotransferase reaction from putrescine to 2-oxoglutarate, leading to glutamate and 4-aminobutanal, which spontaneously cyclizes to form 1-pyrroline. This is the first step in one of two pathways for putrescine degradation, where putrescine is converted into 4-aminobutanoate (gamma-aminobutyrate or GABA) via 4-aminobutanal. Also functions as a cadaverine transaminase in a a L-lysine degradation pathway to succinate that proceeds via cadaverine, glutarate and L-2-hydroxyglutarate. This Salmonella choleraesuis (strain SC-B67) protein is Putrescine aminotransferase.